A 465-amino-acid polypeptide reads, in one-letter code: Ribulose bisphosphate carboxylase large chain (465 aa).

Lysine 4 is modified (N6,N6,N6-trimethyllysine). Residues asparagine 113 and threonine 163 each contribute to the substrate site. Lysine 165 acts as the Proton acceptor in catalysis. Residue lysine 167 participates in substrate binding. Lysine 191, aspartate 193, and glutamate 194 together coordinate Mg(2+). Lysine 191 is modified (N6-carboxylysine). The active-site Proton acceptor is the histidine 284. Residues arginine 285, histidine 317, and serine 369 each contribute to the substrate site.

This sequence belongs to the RuBisCO large chain family. Type I subfamily. As to quaternary structure, heterohexadecamer of 8 large chains and 8 small chains; disulfide-linked. The disulfide link is formed within the large subunit homodimers. Mg(2+) is required as a cofactor. The disulfide bond which can form in the large chain dimeric partners within the hexadecamer appears to be associated with oxidative stress and protein turnover.

Its subcellular location is the plastid. The protein localises to the chloroplast. The enzyme catalyses 2 (2R)-3-phosphoglycerate + 2 H(+) = D-ribulose 1,5-bisphosphate + CO2 + H2O. It carries out the reaction D-ribulose 1,5-bisphosphate + O2 = 2-phosphoglycolate + (2R)-3-phosphoglycerate + 2 H(+). RuBisCO catalyzes two reactions: the carboxylation of D-ribulose 1,5-bisphosphate, the primary event in carbon dioxide fixation, as well as the oxidative fragmentation of the pentose substrate in the photorespiration process. Both reactions occur simultaneously and in competition at the same active site. The protein is Ribulose bisphosphate carboxylase large chain of Bursera inaguensis (Elaphrium inaguense).